The chain runs to 479 residues: Glucagon receptor (479 aa).

The signal sequence occupies residues 1-25; sequence MPPARLRHPHLLLLLLLACQPQAPA. The Extracellular portion of the chain corresponds to 26–136; the sequence is AQAMDFLFQK…ELGVQREVAE (111 aa). Disulfide bonds link Cys-43-Cys-67, Cys-58-Cys-100, and Cys-81-Cys-121. Asn-46, Asn-59, Asn-74, Asn-78, and Asn-117 each carry an N-linked (GlcNAc...) asparagine glycan. The helical transmembrane segment at 137 to 161 threads the bilayer; that stretch reads MYSSFQAMYTAGYSLSLAALLLALA. The Cytoplasmic segment spans residues 162–173; sequence ILLGLSKLHCTR. The chain crosses the membrane as a helical span at residues 174–198; sequence NYIHANLLASFVLRASSVLALDALL. The Extracellular segment spans residues 199–225; it reads KTRYSQRLGDDLSVSIWLSDEAVAGCR. Residues Cys-224 and Cys-294 are joined by a disulfide bond. The chain crosses the membrane as a helical span at residues 226–249; the sequence is VAAVFMQYGVVANYCWLLVEGVYL. Residues 250–263 lie on the Cytoplasmic side of the membrane; that stretch reads HSLLRQATIPERSC. A helical transmembrane segment spans residues 264 to 285; that stretch reads FPLYLAIGWGAPMLFVIPWAVV. Residues 286–303 lie on the Extracellular side of the membrane; sequence KCLFENIQCWTSNDNMGF. A helical membrane pass occupies residues 304–326; the sequence is WWILRFPVFLAILINFSIFIRVL. The Cytoplasmic segment spans residues 327 to 350; it reads HVLVAKLRAHQMRCTDYKFRLARS. Residues 351–369 traverse the membrane as a helical segment; that stretch reads TLTLIPLLGVHEVVFAFVT. The Extracellular portion of the chain corresponds to 370–381; the sequence is DEHAQGALRSAK. A helical membrane pass occupies residues 382–402; the sequence is LFFDLFLSSFQGLLVAVLYCF. The Cytoplasmic portion of the chain corresponds to 403 to 479; sequence LNKEVQAELL…GLPGVAENPF (77 aa). Residues 426–479 form a disordered region; that stretch reads KAHRVGSHSARPPSGPPSEKLLLSTGGSSNGTSQEPSAETHLASGLPGVAENPF. Low complexity predominate over residues 446-458; that stretch reads LLLSTGGSSNGTS. Ser-458 carries the post-translational modification Phosphoserine.

The protein belongs to the G-protein coupled receptor 2 family. In terms of processing, ligand-binding promotes phosphorylation of serine residues in the C-terminal cytoplasmic domain. Phosphorylation is important for receptor endocytosis after ligand-binding.

It localises to the cell membrane. G-protein coupled receptor for glucagon that plays a central role in the regulation of blood glucose levels and glucose homeostasis. Regulates the rate of hepatic glucose production by promoting glycogen hydrolysis and gluconeogenesis. Plays an important role in mediating the responses to fasting. Ligand binding causes a conformation change that triggers signaling via guanine nucleotide-binding proteins (G proteins) and modulates the activity of down-stream effectors, such as adenylate cyclase. Promotes activation of adenylate cyclase. Besides, plays a role in signaling via a phosphatidylinositol-calcium second messenger system. This is Glucagon receptor from Sus scrofa (Pig).